The following is a 218-amino-acid chain: MVKYMKIVGITDLHGKLPPAVREFKDFADVLVVCGDITHFGKGIEVIEKLAELSDYMEVLCVPGNCDTKEVIDELNSFKLNIDRKVKKIENINFVGIGGSNKTPFNTPNEYTEEEIYNKLINVVKNLKNIFLVSHAPPYNTMADIVDLDKDIHVGSKSIRKIIEDFNENIRFCACGHIHESRCIDKIGNTIVVNPSPKSYFVYDTKKNMVVLDDFNGF.

This is an uncharacterized protein from Methanocaldococcus jannaschii (strain ATCC 43067 / DSM 2661 / JAL-1 / JCM 10045 / NBRC 100440) (Methanococcus jannaschii).